The chain runs to 123 residues: Ragulator complex protein LAMTOR3-B (123 aa).

The protein belongs to the LAMTOR3 family. In terms of assembly, part of the Ragulator complex composed of lamtor1, lamtor2, lamtor3, lamtor4 and lamtor5. The Ragulator complex interacts with slc38a9; the probable amino acid sensor. Component of the lysosomal folliculin complex (LFC).

The protein localises to the late endosome membrane. Its function is as follows. As part of the Ragulator complex it is involved in amino acid sensing and activation of mTORC1, a signaling complex promoting cell growth in response to growth factors, energy levels, and amino acids. Activated by amino acids through a mechanism involving the lysosomal V-ATPase, the Ragulator plays a dual role for the small GTPases Rag (RagA/RRAGA, RagB/RRAGB, RagC/RRAGC and/or RagD/RRAGD): it (1) acts as a guanine nucleotide exchange factor (GEF), activating the small GTPases Rag and (2) mediates recruitment of Rag GTPases to the lysosome membrane. Activated Ragulator and Rag GTPases function as a scaffold recruiting mTORC1 to lysosomes where it is in turn activated. The polypeptide is Ragulator complex protein LAMTOR3-B (lamtor3-b) (Xenopus laevis (African clawed frog)).